The primary structure comprises 242 residues: Sugar fermentation stimulation protein homolog (242 aa).

The protein belongs to the SfsA family.

This Enterococcus mundtii protein is Sugar fermentation stimulation protein homolog.